Reading from the N-terminus, the 178-residue chain is Conodipine-P2 (178 aa).

The N-terminal stretch at 1–24 is a signal peptide; sequence MKLLAPVLWAMAALGVTWLVAVDS. 4-hydroxyproline occurs at positions 38, 42, and 49. Histidine 54 is an active-site residue. The propeptide at 98–130 is interchain peptide; it reads KREVTSHRATSIAHSRLWKTALDQKSFLNRKAR. Glutamine 131 carries the pyrrolidone carboxylic acid modification. Position 137 is a 4-hydroxyproline (proline 137).

The protein belongs to the phospholipase A2 family. Group IX subfamily. In terms of assembly, heterodimer of an alpha and a beta chain; probably disulfide-linked. It depends on Ca(2+) as a cofactor. In terms of tissue distribution, expressed by the venom duct.

The protein resides in the secreted. The catalysed reaction is a 1,2-diacyl-sn-glycero-3-phosphocholine + H2O = a 1-acyl-sn-glycero-3-phosphocholine + a fatty acid + H(+). Its function is as follows. Catalyzes the calcium-dependent hydrolysis of the 2-acyl groups in 3-sn-phosphoglycerides. The protein is Conodipine-P2 of Conus purpurascens (Purple cone).